A 219-amino-acid polypeptide reads, in one-letter code: MFITFEGIDGCGKTTQSILLAKYMSDLYGEDNVVLTREPGGTSFNELLRSVFLSVSDYKVDKLTELFLFLAMRRESFVKVVESALRANKIVISDRCVDSTVAYQGYGCGIDLDLIYKLNSLVMGIVPDMTFIIDIDIEKALSRATRNGYESNSMDFYHKVRKGFQRIAEEEKHRCVLLRCDDYEENGICDVYSVHNKIVGLLQGVLHNKMDAASSSVKV.

7 to 14 (GIDGCGKT) contributes to the ATP binding site.

This sequence belongs to the thymidylate kinase family.

The enzyme catalyses dTMP + ATP = dTDP + ADP. In terms of biological role, phosphorylation of dTMP to form dTDP in both de novo and salvage pathways of dTTP synthesis. The chain is Thymidylate kinase from Anaplasma phagocytophilum (strain HZ).